The primary structure comprises 128 residues: MTKTPETTKKAIAHGNYVRGSASKVRRVLDQIRGRSYRDALIMLEFMPYRSTDPITKVLRSAVANAEHNLGMDPSTLVISSAWANSGPVMKRYRPRAQGRAFSIKKQTCHISISVESAPTETNAEVQN.

It belongs to the universal ribosomal protein uL22 family. Part of the 50S ribosomal subunit.

This protein binds specifically to 23S rRNA; its binding is stimulated by other ribosomal proteins, e.g. L4, L17, and L20. It is important during the early stages of 50S assembly. It makes multiple contacts with different domains of the 23S rRNA in the assembled 50S subunit and ribosome. Its function is as follows. The globular domain of the protein is located near the polypeptide exit tunnel on the outside of the subunit, while an extended beta-hairpin is found that lines the wall of the exit tunnel in the center of the 70S ribosome. This Prochlorococcus marinus (strain AS9601) protein is Large ribosomal subunit protein uL22.